Consider the following 1322-residue polypeptide: Putative DNA ligase 4 (1322 aa).

The ATP site is built by E265, K267, R272, R287, E317, F387, E497, K502, R513, K519, and K521. The active-site N6-AMP-lysine intermediate is K267. A Mg(2+)-binding site is contributed by E317. E497 lines the Mg(2+) pocket. BRCT domains follow at residues 686 to 768 (LDVQ…PKFD) and 825 to 935 (ERFC…TYSL). Disordered regions lie at residues 945-1212 (IERS…SATC) and 1245-1310 (AEAK…KKVS). A compositionally biased stretch (basic and acidic residues) spans 957-969 (DKLEENEKADTSH). Basic residues-rich tracts occupy residues 970–979 (VKHAPRKRGR) and 994–1005 (PVRRTRARRGNQ). 2 stretches are compositionally biased toward basic and acidic residues: residues 1007-1022 (AKIDDVEPEESDHGET) and 1033-1047 (NISKMEVDSFDKDQV). The span at 1051–1063 (PVRRTRARRGKQH) shows a compositional bias: basic residues. Basic and acidic residues-rich tracts occupy residues 1082 to 1104 (DDQRLDADYISKMEEDSSDRDQG), 1125 to 1161 (AKIDRETGPGETGQDDKKLNADSISKMEEHAHDKDQE), and 1190 to 1204 (PKHERNQTVLRRDTA). Residues 1261–1288 (SSYVAPVPQASASSASSSGVPAPHAGSS) are compositionally biased toward low complexity.

The protein belongs to the ATP-dependent DNA ligase family. Mg(2+) serves as cofactor.

The protein localises to the nucleus. The catalysed reaction is ATP + (deoxyribonucleotide)n-3'-hydroxyl + 5'-phospho-(deoxyribonucleotide)m = (deoxyribonucleotide)n+m + AMP + diphosphate.. Functionally, DNA ligase involved in DNA non-homologous end joining (NHEJ); required for double-strand break (DSB) repair. The sequence is that of Putative DNA ligase 4 (LIG4) from Oryza sativa subsp. japonica (Rice).